A 129-amino-acid chain; its full sequence is Large ribosomal subunit protein uL22 (129 aa).

Belongs to the universal ribosomal protein uL22 family. Part of the 50S ribosomal subunit.

Its function is as follows. This protein binds specifically to 23S rRNA; its binding is stimulated by other ribosomal proteins, e.g. L4, L17, and L20. It is important during the early stages of 50S assembly. It makes multiple contacts with different domains of the 23S rRNA in the assembled 50S subunit and ribosome. Functionally, the globular domain of the protein is located near the polypeptide exit tunnel on the outside of the subunit, while an extended beta-hairpin is found that lines the wall of the exit tunnel in the center of the 70S ribosome. The polypeptide is Large ribosomal subunit protein uL22 (Agrobacterium fabrum (strain C58 / ATCC 33970) (Agrobacterium tumefaciens (strain C58))).